Reading from the N-terminus, the 190-residue chain is Elongation factor P-like protein (190 aa).

This sequence belongs to the elongation factor P family.

The protein is Elongation factor P-like protein of Salmonella gallinarum (strain 287/91 / NCTC 13346).